We begin with the raw amino-acid sequence, 356 residues long: 3-dehydroquinate synthase (356 aa).

NAD(+)-binding positions include 71-76 (EGEASK), 105-109 (GVTGD), 129-130 (TS), Lys-142, and Lys-151. Glu-184, His-247, and His-264 together coordinate Zn(2+).

Belongs to the sugar phosphate cyclases superfamily. Dehydroquinate synthase family. Requires Co(2+) as cofactor. It depends on Zn(2+) as a cofactor. The cofactor is NAD(+).

The protein resides in the cytoplasm. The catalysed reaction is 7-phospho-2-dehydro-3-deoxy-D-arabino-heptonate = 3-dehydroquinate + phosphate. Its pathway is metabolic intermediate biosynthesis; chorismate biosynthesis; chorismate from D-erythrose 4-phosphate and phosphoenolpyruvate: step 2/7. In terms of biological role, catalyzes the conversion of 3-deoxy-D-arabino-heptulosonate 7-phosphate (DAHP) to dehydroquinate (DHQ). This chain is 3-dehydroquinate synthase, found in Lactococcus lactis subsp. cremoris (strain MG1363).